The primary structure comprises 242 residues: Triosephosphate isomerase (242 aa).

9–11 (NWK) provides a ligand contact to substrate. The active-site Electrophile is the histidine 90. Catalysis depends on glutamate 162, which acts as the Proton acceptor. Substrate contacts are provided by residues glycine 168, serine 205, and 226-227 (GG).

Belongs to the triosephosphate isomerase family. As to quaternary structure, homodimer.

The protein resides in the cytoplasm. It carries out the reaction D-glyceraldehyde 3-phosphate = dihydroxyacetone phosphate. The protein operates within carbohydrate biosynthesis; gluconeogenesis. It participates in carbohydrate degradation; glycolysis; D-glyceraldehyde 3-phosphate from glycerone phosphate: step 1/1. Functionally, involved in the gluconeogenesis. Catalyzes stereospecifically the conversion of dihydroxyacetone phosphate (DHAP) to D-glyceraldehyde-3-phosphate (G3P). The sequence is that of Triosephosphate isomerase from Azoarcus sp. (strain BH72).